The following is a 452-amino-acid chain: AP-4 complex subunit mu-1 (452 aa).

An MHD domain is found at 184 to 451 (KNEVFLDVVE…LSHSDAYVIR (268 aa)).

Belongs to the adaptor complexes medium subunit family. In terms of assembly, adaptor protein complex 4 (AP-4) is a heterotetramer composed of two large adaptins (epsilon-type subunit AP4E1 and beta-type subunit AP4B1), a medium adaptin (mu-type subunit AP4M1) and a small adaptin (sigma-type AP4S1). Interacts with tyrosine-based sorting signals on the cytoplasmic tail of cargo proteins such as APP, ATG9A, LAMP2 and NAGPA. Interacts with the C-terminal domain of GRID2. Interacts with GRIA1 and GRIA2; the interaction is indirect via CACNG3. Interacts with CACNG3; CACNG3 associates GRIA1 and GRIA2 with the adaptor protein complex 4 (AP-4) to target them to the somatodendritic compartment of neurons. Interacts with HOOK1 and HOOK2; the interactions are direct, mediate the interaction between FTS-Hook-FHIP (FHF) complex and AP-4 and the perinuclear distribution of AP-4.

The protein localises to the golgi apparatus. It is found in the trans-Golgi network membrane. The protein resides in the early endosome. Functionally, component of the adaptor protein complex 4 (AP-4). Adaptor protein complexes are vesicle coat components involved both in vesicle formation and cargo selection. They control the vesicular transport of proteins in different trafficking pathways. AP-4 forms a non clathrin-associated coat on vesicles departing the trans-Golgi network (TGN) and may be involved in the targeting of proteins from the trans-Golgi network (TGN) to the endosomal-lysosomal system. It is also involved in protein sorting to the basolateral membrane in epithelial cells and the proper asymmetric localization of somatodendritic proteins in neurons. Within AP-4, the mu-type subunit AP4M1 is directly involved in the recognition and binding of tyrosine-based sorting signals found in the cytoplasmic part of cargos. The adaptor protein complex 4 (AP-4) may also recognize other types of sorting signal. The polypeptide is AP-4 complex subunit mu-1 (Canis lupus familiaris (Dog)).